The following is a 634-amino-acid chain: Ras and EF-hand domain-containing protein homolog (634 aa).

2 EF-hand domains span residues 5–33 (EVENLFSLCDSESKGYLTMEDLRKVCPQL) and 33–68 (LDDNDLRFIFTELDQDGSGKIEKLEFLRGFQDTVQH). 5 residues coordinate Ca(2+): aspartate 46, aspartate 48, serine 50, lysine 52, and glutamate 57. A coiled-coil region spans residues 169-310 (LSEKKHENER…RCEFDQKQDE (142 aa)). A disordered region spans residues 212–234 (ARQEERDRLTKEKEEMRQRMSDE). GTP-binding positions include 449-454 (AVGKSS), 552-555 (NKVD), and 585-586 (AL). Positions 632–634 (RGS) are cleaved as a propeptide — removed in mature form.

It belongs to the small GTPase superfamily. Rab family. In terms of assembly, homodimer.

Its subcellular location is the cytoplasm. It is found in the perinuclear region. Functionally, binds GTP and GDP. Plays a role in uterine seam cell development. The sequence is that of Ras and EF-hand domain-containing protein homolog from Caenorhabditis elegans.